The primary structure comprises 884 residues: Protein translocase subunit SecA (884 aa).

ATP is bound by residues Gln83, 101 to 105, and Asp491; that span reads GEGKT.

It belongs to the SecA family.

The protein resides in the plastid. It localises to the chloroplast stroma. It is found in the chloroplast thylakoid membrane. The enzyme catalyses ATP + H2O + cellular proteinSide 1 = ADP + phosphate + cellular proteinSide 2.. Its function is as follows. Has a central role in coupling the hydrolysis of ATP to the transfer of proteins across the thylakoid membrane. This chain is Protein translocase subunit SecA, found in Pyropia yezoensis (Susabi-nori).